The following is a 1213-amino-acid chain: Chitin synthase 3 (1213 aa).

The disordered stretch occupies residues 1–97; that stretch reads MSNFRDSSSP…TPPHQEEEED (97 aa). Residues 1 to 168 are Cytoplasmic-facing; sequence MSNFRDSSSP…KPKHDIYFWK (168 aa). Positions 32-44 are enriched in basic and acidic residues; it reads IRPERSRMDESHP. Over residues 75–87 the composition is skewed to polar residues; it reads ELSTSRSHLSNYA. The chain crosses the membrane as a helical span at residues 169-189; sequence VYCYAITFWAPAPLLKLFGLP. The Extracellular portion of the chain corresponds to 190 to 200; the sequence is TKDRQFAWREK. The chain crosses the membrane as a helical span at residues 201–221; the sequence is IGLISCILYVGAFVAYLTFGF. The Cytoplasmic segment spans residues 222–450; that stretch reads TKTVCSSQVV…TDTIGCIASK (229 aa). The helical transmembrane segment at 451–471 threads the bilayer; it reads VVLYMSLVFILSVVVVKFIMA. Residues 472-1016 are Extracellular-facing; sequence CWFKWVTSRK…INSTVHNLFE (545 aa). N-linked (GlcNAc...) asparagine glycosylation is found at N588 and N1008. The chain crosses the membrane as a helical span at residues 1017-1037; the sequence is LVLVKDLCGTFCFSMQFVIFI. Residues 1038–1039 are Cytoplasmic-facing; that stretch reads EL. The helical transmembrane segment at 1040-1060 threads the bilayer; sequence IGTLVLPAAITFTIYVIIVAI. Topologically, residues 1061–1065 are extracellular; sequence VSKPT. Residues 1066 to 1086 form a helical membrane-spanning segment; it reads PVMSLVLLAVIFGLPGCLIVI. The Cytoplasmic segment spans residues 1087–1213; the sequence is TVSSLSYLVY…LSQGSSSGSS (127 aa). A disordered region spans residues 1161–1213; sequence ERRSTENRKQQQQQQLTNNSSNNLAVPGAAWDPSNTGGNLIDDLSQGSSSGSS.

The protein belongs to the chitin synthase family. Class IV subfamily.

It localises to the cell membrane. It carries out the reaction [(1-&gt;4)-N-acetyl-beta-D-glucosaminyl](n) + UDP-N-acetyl-alpha-D-glucosamine = [(1-&gt;4)-N-acetyl-beta-D-glucosaminyl](n+1) + UDP + H(+). Functionally, polymerizes chitin, a structural polymer of the cell wall and septum, by transferring the sugar moiety of UDP-GlcNAc to the non-reducing end of the growing chitin polymer. This Candida albicans (Yeast) protein is Chitin synthase 3 (CHS3).